The primary structure comprises 191 residues: Holliday junction branch migration complex subunit RuvA (191 aa).

The interval 1–64 (MIRGVRGTLV…EDELALYGFA (64 aa)) is domain I. A domain II region spans residues 65–136 (TEAELELFLS…ELRGRLPALT (72 aa)). The segment at 136-139 (TEVQ) is flexible linker. Residues 140–191 (AGEPIDQELVAALQALGYTAQEARQAATHPEVRRAPSLEERIVAALRQLAPP) form a domain III region.

It belongs to the RuvA family. In terms of assembly, homotetramer. Forms an RuvA(8)-RuvB(12)-Holliday junction (HJ) complex. HJ DNA is sandwiched between 2 RuvA tetramers; dsDNA enters through RuvA and exits via RuvB. An RuvB hexamer assembles on each DNA strand where it exits the tetramer. Each RuvB hexamer is contacted by two RuvA subunits (via domain III) on 2 adjacent RuvB subunits; this complex drives branch migration. In the full resolvosome a probable DNA-RuvA(4)-RuvB(12)-RuvC(2) complex forms which resolves the HJ.

It is found in the cytoplasm. The RuvA-RuvB-RuvC complex processes Holliday junction (HJ) DNA during genetic recombination and DNA repair, while the RuvA-RuvB complex plays an important role in the rescue of blocked DNA replication forks via replication fork reversal (RFR). RuvA specifically binds to HJ cruciform DNA, conferring on it an open structure. The RuvB hexamer acts as an ATP-dependent pump, pulling dsDNA into and through the RuvAB complex. HJ branch migration allows RuvC to scan DNA until it finds its consensus sequence, where it cleaves and resolves the cruciform DNA. This chain is Holliday junction branch migration complex subunit RuvA, found in Thermomicrobium roseum (strain ATCC 27502 / DSM 5159 / P-2).